Reading from the N-terminus, the 278-residue chain is Sulfur carrier protein FdhD (278 aa).

C117 serves as the catalytic Cysteine persulfide intermediate.

Belongs to the FdhD family.

The protein resides in the cytoplasm. In terms of biological role, required for formate dehydrogenase (FDH) activity. Acts as a sulfur carrier protein that transfers sulfur from IscS to the molybdenum cofactor prior to its insertion into FDH. The chain is Sulfur carrier protein FdhD from Variovorax paradoxus (strain S110).